The primary structure comprises 431 residues: Glutamate--tRNA ligase 1 (431 aa).

The 'HIGH' region motif lies at 11 to 21; sequence PSPTGDLHLGG. A 'KMSKS' region motif is present at residues 203 to 207; it reads KLSKR. Lysine 206 is a binding site for ATP.

This sequence belongs to the class-I aminoacyl-tRNA synthetase family. Glutamate--tRNA ligase type 1 subfamily. As to quaternary structure, monomer.

It is found in the cytoplasm. The enzyme catalyses tRNA(Glu) + L-glutamate + ATP = L-glutamyl-tRNA(Glu) + AMP + diphosphate. Functionally, catalyzes the attachment of glutamate to tRNA(Glu) in a two-step reaction: glutamate is first activated by ATP to form Glu-AMP and then transferred to the acceptor end of tRNA(Glu). This Rubrobacter xylanophilus (strain DSM 9941 / JCM 11954 / NBRC 16129 / PRD-1) protein is Glutamate--tRNA ligase 1.